The sequence spans 201 residues: Holliday junction branch migration complex subunit RuvA (201 aa).

The domain I stretch occupies residues 1 to 63 (MYDYIKGTVT…EDNISLFGFQ (63 aa)). The interval 64 to 142 (TTEERYLFKK…DVVASEIVYV (79 aa)) is domain II. Residues 143–153 (APENDMVAGLS) form a flexible linker region. The domain III stretch occupies residues 153 to 201 (SPQLEEAVLALEALGYSTRELKKVIPKLSKEEDLTSDAYIKLALQLMTK).

This sequence belongs to the RuvA family. Homotetramer. Forms an RuvA(8)-RuvB(12)-Holliday junction (HJ) complex. HJ DNA is sandwiched between 2 RuvA tetramers; dsDNA enters through RuvA and exits via RuvB. An RuvB hexamer assembles on each DNA strand where it exits the tetramer. Each RuvB hexamer is contacted by two RuvA subunits (via domain III) on 2 adjacent RuvB subunits; this complex drives branch migration. In the full resolvosome a probable DNA-RuvA(4)-RuvB(12)-RuvC(2) complex forms which resolves the HJ.

It is found in the cytoplasm. Functionally, the RuvA-RuvB-RuvC complex processes Holliday junction (HJ) DNA during genetic recombination and DNA repair, while the RuvA-RuvB complex plays an important role in the rescue of blocked DNA replication forks via replication fork reversal (RFR). RuvA specifically binds to HJ cruciform DNA, conferring on it an open structure. The RuvB hexamer acts as an ATP-dependent pump, pulling dsDNA into and through the RuvAB complex. HJ branch migration allows RuvC to scan DNA until it finds its consensus sequence, where it cleaves and resolves the cruciform DNA. This chain is Holliday junction branch migration complex subunit RuvA, found in Listeria monocytogenes serotype 4b (strain CLIP80459).